The sequence spans 210 residues: Thymidylate kinase (210 aa).

Position 10–17 (10–17 (GLEGAGKS)) interacts with ATP.

It belongs to the thymidylate kinase family.

It catalyses the reaction dTMP + ATP = dTDP + ADP. Its function is as follows. Phosphorylation of dTMP to form dTDP in both de novo and salvage pathways of dTTP synthesis. The protein is Thymidylate kinase of Haemophilus influenzae (strain PittGG).